A 99-amino-acid polypeptide reads, in one-letter code: Small ribosomal subunit protein uS14c (99 aa).

Residues 46 to 66 (LQSSPRNSAPTRLHRRCSSTG) are disordered.

The protein belongs to the universal ribosomal protein uS14 family. Part of the 30S ribosomal subunit.

The protein localises to the plastid. The protein resides in the chloroplast. Binds 16S rRNA, required for the assembly of 30S particles. In Pinus thunbergii (Japanese black pine), this protein is Small ribosomal subunit protein uS14c.